Reading from the N-terminus, the 258-residue chain is Snake venom serine protease 5 (258 aa).

A signal peptide spans methionine 1 to alanine 18. Residues glutamine 19–leucine 24 constitute a propeptide that is removed on maturation. In terms of domain architecture, Peptidase S1 spans valine 25–alanine 249. Intrachain disulfides connect cysteine 31–cysteine 163, cysteine 50–cysteine 66, cysteine 98–cysteine 256, cysteine 142–cysteine 210, cysteine 174–cysteine 189, and cysteine 200–cysteine 225. Asparagine 44 carries an N-linked (GlcNAc...) asparagine glycan. Histidine 65 serves as the catalytic Charge relay system. A glycan (N-linked (GlcNAc...) asparagine) is linked at asparagine 103. Residue aspartate 110 is the Charge relay system of the active site. N-linked (GlcNAc...) asparagine glycosylation is found at asparagine 121, asparagine 122, asparagine 154, and asparagine 170. Serine 204 acts as the Charge relay system in catalysis. N-linked (GlcNAc...) asparagine glycosylation occurs at asparagine 251.

Belongs to the peptidase S1 family. Snake venom subfamily. Monomer. In terms of tissue distribution, expressed by the venom gland.

The protein resides in the secreted. In terms of biological role, snake venom serine protease that may act in the hemostasis system of the prey. The sequence is that of Snake venom serine protease 5 from Trimeresurus stejnegeri (Chinese green tree viper).